The primary structure comprises 510 residues: Light-independent protochlorophyllide reductase subunit B (510 aa).

Residue Asp-36 participates in [4Fe-4S] cluster binding. The active-site Proton donor is Asp-296. A substrate-binding site is contributed by Gly-431–Met-432.

It belongs to the ChlB/BchB/BchZ family. Protochlorophyllide reductase is composed of three subunits; ChlL, ChlN and ChlB. Forms a heterotetramer of two ChlB and two ChlN subunits. [4Fe-4S] cluster serves as cofactor.

It catalyses the reaction chlorophyllide a + oxidized 2[4Fe-4S]-[ferredoxin] + 2 ADP + 2 phosphate = protochlorophyllide a + reduced 2[4Fe-4S]-[ferredoxin] + 2 ATP + 2 H2O. The protein operates within porphyrin-containing compound metabolism; chlorophyll biosynthesis (light-independent). In terms of biological role, component of the dark-operative protochlorophyllide reductase (DPOR) that uses Mg-ATP and reduced ferredoxin to reduce ring D of protochlorophyllide (Pchlide) to form chlorophyllide a (Chlide). This reaction is light-independent. The NB-protein (ChlN-ChlB) is the catalytic component of the complex. The polypeptide is Light-independent protochlorophyllide reductase subunit B (Synechococcus sp. (strain JA-2-3B'a(2-13)) (Cyanobacteria bacterium Yellowstone B-Prime)).